The chain runs to 444 residues: 3-isopropylmalate dehydratase large subunit (444 aa).

Positions 348, 408, and 411 each coordinate [4Fe-4S] cluster. Positions 423–444 are disordered; sequence ERXXSHSNRNFEGRQGRGGRTH.

This sequence belongs to the aconitase/IPM isomerase family. LeuC type 1 subfamily. Heterodimer of LeuC and LeuD. [4Fe-4S] cluster is required as a cofactor.

The catalysed reaction is (2R,3S)-3-isopropylmalate = (2S)-2-isopropylmalate. It functions in the pathway amino-acid biosynthesis; L-leucine biosynthesis; L-leucine from 3-methyl-2-oxobutanoate: step 2/4. Functionally, catalyzes the isomerization between 2-isopropylmalate and 3-isopropylmalate, via the formation of 2-isopropylmaleate. This Buchnera aphidicola subsp. Uroleucon rudbeckiae protein is 3-isopropylmalate dehydratase large subunit.